The chain runs to 173 residues: Translation initiation factor IF-3 (173 aa).

This sequence belongs to the IF-3 family. In terms of assembly, monomer.

It localises to the cytoplasm. Its function is as follows. IF-3 binds to the 30S ribosomal subunit and shifts the equilibrium between 70S ribosomes and their 50S and 30S subunits in favor of the free subunits, thus enhancing the availability of 30S subunits on which protein synthesis initiation begins. The chain is Translation initiation factor IF-3 from Caulobacter sp. (strain K31).